The chain runs to 347 residues: Spermidine/putrescine import ATP-binding protein PotA (347 aa).

The region spanning 6 to 236 (IEIKNVYKEF…PKNAFVAKFI (231 aa)) is the ABC transporter domain. An ATP-binding site is contributed by 38–45 (GPSGCGKT).

It belongs to the ABC transporter superfamily. Spermidine/putrescine importer (TC 3.A.1.11.1) family. As to quaternary structure, the complex is composed of two ATP-binding proteins (PotA), two transmembrane proteins (PotB and PotC) and a solute-binding protein (PotD).

The protein resides in the cell membrane. The catalysed reaction is ATP + H2O + polyamine-[polyamine-binding protein]Side 1 = ADP + phosphate + polyamineSide 2 + [polyamine-binding protein]Side 1.. Functionally, part of the ABC transporter complex PotABCD involved in spermidine/putrescine import. Responsible for energy coupling to the transport system. In Clostridium novyi (strain NT), this protein is Spermidine/putrescine import ATP-binding protein PotA.